Reading from the N-terminus, the 141-residue chain is MRHGKSGRKLNRTTSHRKAMFANMAASLIEHEQIVTTLPKAKEIRPIVEKLVTLGKRGDLHARRQAIAAIRDTEKVAKLFSALAPRYESRHGGYLRIMKAGFRTGDNAPMAVVEFVDRDVNAKGATDHERKVAKVTEKEDS.

It belongs to the bacterial ribosomal protein bL17 family. Part of the 50S ribosomal subunit. Contacts protein L32.

The sequence is that of Large ribosomal subunit protein bL17 from Bartonella bacilliformis (strain ATCC 35685 / KC583 / Herrer 020/F12,63).